Consider the following 432-residue polypeptide: Septin-14 (432 aa).

The Septin-type G domain maps to 49 to 315 (QGFTFNILCV…ECYRYQKLQK (267 aa)). The G1 motif stretch occupies residues 59–66 (GETGIGKS). Residues 59-66 (GETGIGKS), Gly-114, 195-203 (KADTISKND), Gly-249, and Arg-264 contribute to the GTP site. Residues 111–114 (ETVG) form a G3 motif region. The segment at 194-197 (AKAD) is G4 motif. Positions 332-412 (EIFEAKRQEF…IIDFYKMKAA (81 aa)) form a coiled coil. Positions 369 to 432 (EAEKELQDKF…DTKKDKHRKK (64 aa)) are required for interaction with SEPTIN4. Required for migration of cortical neurons during corticogenesis.

It belongs to the TRAFAC class TrmE-Era-EngA-EngB-Septin-like GTPase superfamily. Septin GTPase family. As to quaternary structure, septins polymerize into heterooligomeric protein complexes that form filaments, and can associate with cellular membranes, actin filaments and microtubules. GTPase activity is required for filament formation. Interacts with ACTN4. Interacts with SEPTIN9. Interacts (via C-terminus) with SEPTIN4. Testis-specific (at protein level).

The protein localises to the cytoplasm. The protein resides in the cytoskeleton. It is found in the cell projection. It localises to the axon. Its subcellular location is the dendrite. The protein localises to the perikaryon. The protein resides in the perinuclear region. It is found in the cytoplasmic vesicle. It localises to the secretory vesicle. Its subcellular location is the acrosome. Filament-forming cytoskeletal GTPase. Involved in the migration of cortical neurons and the formation of neuron leading processes during embryonic development. Plays a role in sperm head formation during spermiogenesis, potentially via facilitating localization of ACTN4 to cell filaments. The polypeptide is Septin-14 (Homo sapiens (Human)).